Here is a 679-residue protein sequence, read N- to C-terminus: Sodium-dependent phosphate transporter 1 (679 aa).

A run of 6 helical transmembrane segments spans residues 21 to 41 (YLWMLILGFIIAFVLAFSVGA), 62 to 82 (ACILASIFETVGSVLLGAKVS), 100 to 120 (GLLMAGSVSAMFGSAVWQLVA), 158 to 178 (IVMSWFVSPLLSGIMSGILFF), 203 to 223 (ACTVGINLFSIMYTGAPLLGF), and 230 to 250 (GTILISVGCAVFCALIVWFFV). Residues serine 265 and serine 269 each carry the phosphoserine modification. A disordered region spans residues 268–288 (ESPLMEKKNSLKEDHEETKLS). Basic and acidic residues predominate over residues 271-286 (LMEKKNSLKEDHEETK). 4 helical membrane-spanning segments follow: residues 511–531 (VSLLFQFLQILTACFGSFAHG), 558–578 (VATPIWLLLYGGVGICIGLWV), 600–620 (FSIELASALTVVIASNIGLPI), and 650–670 (IFMAWFVTVPISGVISAAIMA). The a stretch occupies residues 550-558 (DTGDVSSKV).

It belongs to the inorganic phosphate transporter (PiT) (TC 2.A.20) family.

The protein localises to the cell membrane. It catalyses the reaction 2 Na(+)(out) + phosphate(out) = 2 Na(+)(in) + phosphate(in). Functionally, sodium-phosphate symporter which preferentially transports the monovalent form of phosphate with a stoichiometry of two sodium ions per phosphate ion. May play a role in extracellular matrix and cartilage calcification as well as in vascular calcification. Essential for cell proliferation but this function is independent of its phosphate transporter activity. The chain is Sodium-dependent phosphate transporter 1 (SLC20A1) from Pongo abelii (Sumatran orangutan).